The following is a 382-amino-acid chain: Guanine nucleotide-binding protein G(s) subunit alpha (382 aa).

A compositionally biased stretch (polar residues) spans M1–V14. The segment at M1 to R31 is disordered. The N-palmitoyl glycine moiety is linked to residue G2. C3 carries S-palmitoyl cysteine lipidation. Positions E17 to R31 are enriched in basic and acidic residues. The 341-residue stretch at A42–L382 folds into the G-alpha domain. The tract at residues R45 to T58 is G1 motif. GTP-binding positions include G50–S57, A51–T58, L186–T192, D211–Q215, V212–R216, N280–D283, K281–L284, and A354. Mg(2+) is bound by residues S57 and T192. Positions D184 to T192 are G2 motif. Residues F207–R216 are G3 motif. The G4 motif stretch occupies residues I276–D283. The interval T352–T357 is G5 motif.

The protein belongs to the G-alpha family. G(s) subfamily. G proteins are composed of 3 units; alpha, beta and gamma. The alpha chain contains the guanine nucleotide binding site.

Guanine nucleotide-binding proteins (G proteins) are involved as modulators or transducers in various transmembrane signaling systems. The G(s) protein is involved in hormonal regulation of adenylate cyclase: it activates the cyclase. The protein is Guanine nucleotide-binding protein G(s) subunit alpha (G-salpha60A) of Drosophila pseudoobscura pseudoobscura (Fruit fly).